We begin with the raw amino-acid sequence, 203 residues long: Protein-methionine-sulfoxide reductase heme-binding subunit MsrQ (203 aa).

A run of 6 helical transmembrane segments spans residues 10 to 30 (IFVV…MSLL), 42 to 62 (LGLG…LQKL), 75 to 95 (LGLW…FFIL), 110 to 130 (PYII…ITSN), 147 to 167 (LVYA…RSDL), and 169 to 189 (EWSI…PAVA).

The protein belongs to the MsrQ family. In terms of assembly, heterodimer of a catalytic subunit (MsrP) and a heme-binding subunit (MsrQ). It depends on FMN as a cofactor. Heme b serves as cofactor.

The protein localises to the cell inner membrane. In terms of biological role, part of the MsrPQ system that repairs oxidized periplasmic proteins containing methionine sulfoxide residues (Met-O), using respiratory chain electrons. Thus protects these proteins from oxidative-stress damage caused by reactive species of oxygen and chlorine generated by the host defense mechanisms. MsrPQ is essential for the maintenance of envelope integrity under bleach stress, rescuing a wide series of structurally unrelated periplasmic proteins from methionine oxidation. MsrQ provides electrons for reduction to the reductase catalytic subunit MsrP, using the quinone pool of the respiratory chain. This chain is Protein-methionine-sulfoxide reductase heme-binding subunit MsrQ, found in Pseudomonas putida (strain GB-1).